Here is a 72-residue protein sequence, read N- to C-terminus: Sperm protein associated with the nucleus on the X chromosome N1 (72 aa).

The segment at 1–40 (MEKPTSSTNGEKRKSPCDSNSKNDEMQETPNRDLVLEPSL) is disordered. The segment covering 10 to 35 (GEKRKSPCDSNSKNDEMQETPNRDLV) has biased composition (basic and acidic residues).

Belongs to the SPAN-X family.

This is Sperm protein associated with the nucleus on the X chromosome N1 (SPANXN1) from Pan troglodytes (Chimpanzee).